We begin with the raw amino-acid sequence, 753 residues long: Polyadenylate-binding protein, cytoplasmic and nuclear (753 aa).

Positions 1-43 (MSAEASTTPAAETPVNGTPETSTTPAAPAAEATAAETAAPSTS) are enriched in low complexity. The interval 1–49 (MSAEASTTPAAETPVNGTPETSTTPAAPAAEATAAETAAPSTSQPHSAS) is disordered. 4 RRM domains span residues 48 to 126 (ASLY…WSQR), 136 to 213 (GNVF…HHIS), 229 to 306 (TNVY…RAQK), and 332 to 460 (VNLY…LAQR). Disordered regions lie at residues 363–417 (VMRD…SDKK), 607–649 (RGPG…PAAG), and 727–753 (GTEG…ENKS). Basic and acidic residues predominate over residues 376 to 417 (DSDKEKKEESKEEKPEAAEKTEEAAKESGDDQDKENKKSDKK). Over residues 607-619 (RGPGYGQGRGGVP) the composition is skewed to gly residues. The segment covering 633-649 (QNAQPAAGRGEEAPAAG) has biased composition (low complexity). One can recognise a PABC domain in the interval 647 to 724 (AAGLTAQSLA…ALSVYDEYMK (78 aa)). Basic and acidic residues predominate over residues 737-753 (PKPKEAATEESTEENKS).

Belongs to the polyadenylate-binding protein type-1 family.

It is found in the cytoplasm. It localises to the nucleus. Binds the poly(A) tail of mRNA. Appears to be an important mediator of the multiple roles of the poly(A) tail in mRNA biogenesis, stability and translation. In the nucleus, involved in both mRNA cleavage and polyadenylation. Is also required for efficient mRNA export to the cytoplasm. Acts in concert with a poly(A)-specific nuclease (PAN) to affect poly(A) tail shortening, which may occur concomitantly with either nucleocytoplasmic mRNA transport or translational initiation. In the cytoplasm, stimulates translation initiation and regulates mRNA decay through translation termination-coupled poly(A) shortening, probably mediated by PAN. The polypeptide is Polyadenylate-binding protein, cytoplasmic and nuclear (pab1) (Aspergillus terreus (strain NIH 2624 / FGSC A1156)).